Reading from the N-terminus, the 399-residue chain is Cell division protein FtsZ (399 aa).

GTP is bound by residues 18-22, 105-107, Glu-136, Arg-140, and Asp-184; these read GGGVN and GTG. The segment at 311-399 is disordered; sequence GFDGGQPPSK…EELDVPDFLK (89 aa). The segment covering 388 to 399 has biased composition (acidic residues); it reads AAEELDVPDFLK.

Belongs to the FtsZ family. As to quaternary structure, homodimer. Polymerizes to form a dynamic ring structure in a strictly GTP-dependent manner. Interacts directly with several other division proteins.

The protein localises to the cytoplasm. Its function is as follows. Essential cell division protein that forms a contractile ring structure (Z ring) at the future cell division site. The regulation of the ring assembly controls the timing and the location of cell division. One of the functions of the FtsZ ring is to recruit other cell division proteins to the septum to produce a new cell wall between the dividing cells. Binds GTP and shows GTPase activity. The sequence is that of Cell division protein FtsZ from Streptomyces coelicolor (strain ATCC BAA-471 / A3(2) / M145).